Reading from the N-terminus, the 940-residue chain is Isoleucine--tRNA ligase (940 aa).

A 'HIGH' region motif is present at residues 58–68 (PYANGDIHIGH). An L-isoleucyl-5'-AMP-binding site is contributed by E564. Residues 605–609 (KMSKS) carry the 'KMSKS' region motif. An ATP-binding site is contributed by K608. C903, C906, C923, and C926 together coordinate Zn(2+).

The protein belongs to the class-I aminoacyl-tRNA synthetase family. IleS type 1 subfamily. In terms of assembly, monomer. The cofactor is Zn(2+).

Its subcellular location is the cytoplasm. The enzyme catalyses tRNA(Ile) + L-isoleucine + ATP = L-isoleucyl-tRNA(Ile) + AMP + diphosphate. Catalyzes the attachment of isoleucine to tRNA(Ile). As IleRS can inadvertently accommodate and process structurally similar amino acids such as valine, to avoid such errors it has two additional distinct tRNA(Ile)-dependent editing activities. One activity is designated as 'pretransfer' editing and involves the hydrolysis of activated Val-AMP. The other activity is designated 'posttransfer' editing and involves deacylation of mischarged Val-tRNA(Ile). This Shewanella piezotolerans (strain WP3 / JCM 13877) protein is Isoleucine--tRNA ligase.